Here is a 181-residue protein sequence, read N- to C-terminus: MAETATIARPYAEALFRVASESSAGNLGAWSELVSEMGQVAANPDMKAVADDPNVPGDKLAELFLSVLKSPVSDEARRFVQLLVENGRLTVMPDIAEQFHALKNAREGSSDVEITSAFPLEDGQLNDLVAALERKFGRKLYAQVAVDPSLIGGVSVKVGDEVLDTSVRARLAAMQTALTAA.

The protein belongs to the ATPase delta chain family. F-type ATPases have 2 components, F(1) - the catalytic core - and F(0) - the membrane proton channel. F(1) has five subunits: alpha(3), beta(3), gamma(1), delta(1), epsilon(1). F(0) has three main subunits: a(1), b(2) and c(10-14). The alpha and beta chains form an alternating ring which encloses part of the gamma chain. F(1) is attached to F(0) by a central stalk formed by the gamma and epsilon chains, while a peripheral stalk is formed by the delta and b chains.

The protein localises to the cell inner membrane. Its function is as follows. F(1)F(0) ATP synthase produces ATP from ADP in the presence of a proton or sodium gradient. F-type ATPases consist of two structural domains, F(1) containing the extramembraneous catalytic core and F(0) containing the membrane proton channel, linked together by a central stalk and a peripheral stalk. During catalysis, ATP synthesis in the catalytic domain of F(1) is coupled via a rotary mechanism of the central stalk subunits to proton translocation. Functionally, this protein is part of the stalk that links CF(0) to CF(1). It either transmits conformational changes from CF(0) to CF(1) or is implicated in proton conduction. In Cupriavidus taiwanensis (strain DSM 17343 / BCRC 17206 / CCUG 44338 / CIP 107171 / LMG 19424 / R1) (Ralstonia taiwanensis (strain LMG 19424)), this protein is ATP synthase subunit delta.